A 134-amino-acid chain; its full sequence is Ribosome-binding factor A (134 aa).

It belongs to the RbfA family. As to quaternary structure, monomer. Binds 30S ribosomal subunits, but not 50S ribosomal subunits or 70S ribosomes.

The protein localises to the cytoplasm. Functionally, one of several proteins that assist in the late maturation steps of the functional core of the 30S ribosomal subunit. Associates with free 30S ribosomal subunits (but not with 30S subunits that are part of 70S ribosomes or polysomes). Required for efficient processing of 16S rRNA. May interact with the 5'-terminal helix region of 16S rRNA. The polypeptide is Ribosome-binding factor A (Baumannia cicadellinicola subsp. Homalodisca coagulata).